Consider the following 320-residue polypeptide: 7-acetyl-epi-neemfruitin B aldo-keto reductase (320 aa).

NADP(+) is bound at residue D51. Y56 functions as the Proton donor in the catalytic mechanism. NADP(+) is bound by residues Q186 and 264 to 272 (FNKQRMEEN).

It belongs to the aldo/keto reductase family. In terms of tissue distribution, mainly expressed in petioles and, to a lower extent, in roots.

The catalysed reaction is 7-acetyl-epi-neemfruitin B + AH2 + H2O = (1S,3bR,4R,5aR,9aR,9bR,11aS)-1-[(4R)-5-[(2S)-3,3-dimethyloxiran-2-yl]-1,4-dihydroxybutan-2-yl]-3b,6,6,9a,11a-pentamethyl-7-oxo-1H,2H,3bH,4H,5H,5aH,6H,7H,9aH,9bH,10H,11H,11aH-cyclopenta[a]phenanthren-4-yl acetate + acetate + A + H(+). The protein operates within secondary metabolite biosynthesis; terpenoid biosynthesis. Its function is as follows. Aldo-keto reductase involved in the biosynthesis of limonoids triterpene natural products such as azadirachtin, an antifeedant widely used as bioinsecticide, and possessing many medicinal applications including anti-tumoral, anti-malarial, anti-rheumatic, antibacterial, anti-inflammatory, anti-pyretic and diuretic effects. Can use 7-acetyl-epi-neemfruitin B as substrate. The chain is 7-acetyl-epi-neemfruitin B aldo-keto reductase from Melia azedarach (Chinaberry tree).